A 242-amino-acid chain; its full sequence is Haloacid dehalogenase-like hydrolase domain-containing protein 3 (242 aa).

Belongs to the HAD-like hydrolase superfamily.

The polypeptide is Haloacid dehalogenase-like hydrolase domain-containing protein 3 (hdhd3) (Danio rerio (Zebrafish)).